Consider the following 1359-residue polypeptide: MWHLRGRSSVTAAAAAALHKPVAHLRLLLAVSAWSVPAAASNVAAASTTTRGGPSPSAGVAPRAMPSSSSSPPSAAEGTTAAAGGFRLTEPSFLESLMPKKEIGVDRFLAAHPEYDGRGALIAIFDSGVDPAAAGLQTTSDGKPKILDVIDCTGSGDVDTSKVVKADDDGSIVGASGTHLTINPSWKNPSQEWHVGCKLVYELFTDTLTSRLKKERKKKWDEHNQEAISEALKQLNEFEKKHSKSDDAKQKMAREDLQSRLEYLRKQAEGYDDRGPVIDIVAWHDGDVWRVAVDTQGLEGNKNCGKLADFVPLTNYRLERKFGIFSKLDACSFVANIYDDGNLVSIVTDCSPHATHVAGIAAAFHPDEPLLNGVAPGAQLISCKIGDTRLGSMETGTGLVRALIAAVEHKCDLINMSYGEPTLLPDYGRFIDLASEVVDKHRIIFISSAGNNGPALNTVGAPGGTSSSIIGVGAYVSPAMAAGAHCVVQAPAEGMEYTWSSRGPTADGDLGVSISAPGGAVAPVPTWTLQSRMLMNGTSMSSPSACGGVALLVSAMKAEGIPLSPYTVRKAIENTAASISDVPEEKLTTGHGLLQVDRAFEYAQQAKELPLVSYRISINQVGKPTSKLRGIYLRGSNTCRQTSEWTVQLDPKFHEDASNMEQLVPFEECLQLHSTDSSVIKIPEYIMVTNNGRTFNIVVNPVNISSGLHYYEVYGIDCKAPWRGPIFRVPITVIKPIALSGEPPALTLSNLSFKSGHIERRFINVPIGASWVEVTMRTSAFDTPRRFFLDTVQICPLKRPIKWEAVVTFSSPSLKNFSFPVEGGLTLELSIAQFWSSGIASHEPTCVDFEIVFHGISVDQKIIGLDGSEAPVRVVARSLLASERLVPVATLNKVKTPYRPVESNLCSLPPSRDRLPSGKQIIALTLTYKFKLEDGAEIKPRVPLLNNRIYDNKFESQYYRISDSNKCVYSSGDVYPNYVKLSKGEYTLQLYIRHDNVQLLEKLKQLVLFIERKLEKKDFIQLSFYSEPDGPTVGNGTFKSSILVPGEPEAFYVGPPSREKLPKNVLPGSVLVGSITYGAVSSFSKKDDQNQHAPASYSISYLIPPSKVDNDKEKGVSSGRKSISERLDDEVRDTKIKFLSGFNQETEDDKSSWTALVASLKPEYPKYTPLLAKILECIVQKATSDDKFSHQKEIIAAADEVVDSIDKEDLAKSLSLKPDPEDEEAQKNKKKMEETRDQLADALYQKGLALAEIESLKTDESTEASAKDVFEENYKELIKWVDAKTTKYGSLTVLRERRCGRLGTALKVLNDMIQDDSEQPKKRLYDLKIQLIEEIGWVHVSAYEKQWMHVRFPPSLPPF.

Residues 45 to 81 (AASTTTRGGPSPSAGVAPRAMPSSSSSPPSAAEGTTA) are disordered. Residues 64 to 81 (AMPSSSSSPPSAAEGTTA) are compositionally biased toward low complexity. The region spanning 102–600 (EIGVDRFLAA…HGLLQVDRAF (499 aa)) is the Peptidase S8 domain. Catalysis depends on charge relay system residues Asp126, His353, and Ser539.

The protein belongs to the peptidase S8 family.

It carries out the reaction Release of an N-terminal tripeptide from a polypeptide.. Its function is as follows. Serine protease that may function in the proteasome pathway. This chain is Tripeptidyl-peptidase 2 (TPP2), found in Oryza sativa subsp. japonica (Rice).